The primary structure comprises 289 residues: tRNA dimethylallyltransferase (289 aa).

Position 9–16 (9–16 (GTTASGKT)) interacts with ATP. A substrate-binding site is contributed by 11–16 (TASGKT). The interaction with substrate tRNA stretch occupies residues 34 to 37 (DSLC).

It belongs to the IPP transferase family. Monomer. Mg(2+) is required as a cofactor.

It catalyses the reaction adenosine(37) in tRNA + dimethylallyl diphosphate = N(6)-dimethylallyladenosine(37) in tRNA + diphosphate. Catalyzes the transfer of a dimethylallyl group onto the adenine at position 37 in tRNAs that read codons beginning with uridine, leading to the formation of N6-(dimethylallyl)adenosine (i(6)A). The sequence is that of tRNA dimethylallyltransferase from Campylobacter jejuni subsp. jejuni serotype O:23/36 (strain 81-176).